The following is a 196-amino-acid chain: Peptidyl-tRNA hydrolase (196 aa).

A tRNA-binding site is contributed by Tyr14. The active-site Proton acceptor is the His19. Residues Phe64, Asn66, and Asn112 each coordinate tRNA.

It belongs to the PTH family. As to quaternary structure, monomer.

It localises to the cytoplasm. The enzyme catalyses an N-acyl-L-alpha-aminoacyl-tRNA + H2O = an N-acyl-L-amino acid + a tRNA + H(+). Its function is as follows. Hydrolyzes ribosome-free peptidyl-tRNAs (with 1 or more amino acids incorporated), which drop off the ribosome during protein synthesis, or as a result of ribosome stalling. In terms of biological role, catalyzes the release of premature peptidyl moieties from peptidyl-tRNA molecules trapped in stalled 50S ribosomal subunits, and thus maintains levels of free tRNAs and 50S ribosomes. This chain is Peptidyl-tRNA hydrolase, found in Solibacter usitatus (strain Ellin6076).